The sequence spans 395 residues: Vacuolar protease A (395 aa).

An N-terminal signal peptide occupies residues 1–18 (MKGSLLLAGATLLGCTSA). Residues 19 to 72 (KLHSLKLKKVSLKEQLEHADIDVQIKSLGQKYMGIRPGQHEQQMFKEQTPIEAE) constitute a propeptide, activation peptide. In terms of domain architecture, Peptidase A1 spans 87–392 (YFSEISIGTP…DLGKGTVGLA (306 aa)). Aspartate 105 is an active-site residue. A disulfide bridge links cysteine 118 with cysteine 123. Asparagine 140 is a glycosylation site (N-linked (GlcNAc...) asparagine). The active site involves aspartate 289. A disulfide bond links cysteine 318 and cysteine 351. A glycan (N-linked (GlcNAc...) asparagine) is linked at asparagine 335.

It belongs to the peptidase A1 family.

The protein resides in the vacuole lumen. It localises to the secreted. The enzyme catalyses Hydrolysis of proteins with broad specificity for peptide bonds. Cleaves -Leu-Leu-|-Val-Tyr- bond in a synthetic substrate. Does not act on esters of Tyr or Arg.. Its function is as follows. Vacuolar aspartic endopeptidase which is probably also secreted and contributes to virulence. The protein is Vacuolar protease A (PEP2) of Arthroderma otae (strain ATCC MYA-4605 / CBS 113480) (Microsporum canis).